The following is a 452-amino-acid chain: GTPase Der (452 aa).

EngA-type G domains are found at residues Pro-4–Asp-169 and Ile-177–Arg-352. GTP contacts are provided by residues Gly-10–Ser-17, Asp-57–Leu-61, Asn-120–Glu-123, Gly-183–Ser-190, Asp-230–Ile-234, and Asn-295–Asp-298. The KH-like domain maps to Arg-353–Lys-438.

It belongs to the TRAFAC class TrmE-Era-EngA-EngB-Septin-like GTPase superfamily. EngA (Der) GTPase family. In terms of assembly, associates with the 50S ribosomal subunit.

Its function is as follows. GTPase that plays an essential role in the late steps of ribosome biogenesis. This Crocosphaera subtropica (strain ATCC 51142 / BH68) (Cyanothece sp. (strain ATCC 51142)) protein is GTPase Der.